The sequence spans 274 residues: uncharacterized protein (274 aa).

Residues Met-1 to Ala-21 form the signal peptide. Residues Thr-249–Phe-266 traverse the membrane as a helical segment.

It is found in the membrane. This is an uncharacterized protein from Archaeoglobus fulgidus (strain ATCC 49558 / DSM 4304 / JCM 9628 / NBRC 100126 / VC-16).